Consider the following 545-residue polypeptide: Chaperonin GroEL (545 aa).

Residues 29-32 (TMGP), Lys50, 86-90 (DGTTT), Gly414, 480-482 (NAA), and Asp496 contribute to the ATP site.

It belongs to the chaperonin (HSP60) family. In terms of assembly, forms a cylinder of 14 subunits composed of two heptameric rings stacked back-to-back. Interacts with the co-chaperonin GroES.

It localises to the cytoplasm. It carries out the reaction ATP + H2O + a folded polypeptide = ADP + phosphate + an unfolded polypeptide.. In terms of biological role, together with its co-chaperonin GroES, plays an essential role in assisting protein folding. The GroEL-GroES system forms a nano-cage that allows encapsulation of the non-native substrate proteins and provides a physical environment optimized to promote and accelerate protein folding. The sequence is that of Chaperonin GroEL from Malacoplasma penetrans (strain HF-2) (Mycoplasma penetrans).